The chain runs to 877 residues: Translation initiation factor IF-2 (877 aa).

Positions 48 to 289 (SSFQNSAPAE…QITKRKERPL (242 aa)) are disordered. The segment covering 78 to 89 (RKNEKKPEENNT) has biased composition (basic and acidic residues). A compositionally biased stretch (basic residues) spans 92 to 101 (KSNRRRNNKR). Residues 102 to 116 (RSSDRARDNKERDAK) are compositionally biased toward basic and acidic residues. Over residues 123-132 (KAAALLQQFK) the composition is skewed to low complexity. Composition is skewed to basic and acidic residues over residues 135 to 155 (QRAE…EYHE) and 162 to 189 (KEQS…EKKV). A compositionally biased stretch (basic residues) spans 277 to 286 (PRKQITKRKE). The tr-type G domain maps to 378–547 (KRPPVVTIMG…LLQADVMELK (170 aa)). The tract at residues 387–394 (GHVDHGKT) is G1. 387–394 (GHVDHGKT) is a binding site for GTP. The interval 412–416 (GITQR) is G2. The interval 433–436 (DTPG) is G3. Residues 433–437 (DTPGH) and 487–490 (NKMD) each bind GTP. Residues 487–490 (NKMD) are G4. The interval 523–525 (SAK) is G5.

The protein belongs to the TRAFAC class translation factor GTPase superfamily. Classic translation factor GTPase family. IF-2 subfamily.

It localises to the cytoplasm. Functionally, one of the essential components for the initiation of protein synthesis. Protects formylmethionyl-tRNA from spontaneous hydrolysis and promotes its binding to the 30S ribosomal subunits. Also involved in the hydrolysis of GTP during the formation of the 70S ribosomal complex. In Lactobacillus acidophilus (strain ATCC 700396 / NCK56 / N2 / NCFM), this protein is Translation initiation factor IF-2.